Here is a 392-residue protein sequence, read N- to C-terminus: MTSVQPVPRLVEQFERGLDAPICLTWELTYACNLACVHCLSSSGKRDPRELSTQQCKDIIDELERMQVFYVNIGGGEPTVRSDFWELVDYATAHHVGVKFSTNGVRITPEVAAKLAASDYVDVQISLDGANAEVNDAVRGKGSFDMAVRALENLSNAGFTDAKISVVVTRQNVDQLDEFAALAARYGATLRITRLRPSGRGADVWDDLHPTAEQQRQLYDWLVAKGDRVLTGDSFFHLSGLGAPGALAGLNLCGAGRVVCLIDPVGDVYACPFAIHDKFLAGNILSDGGFQNVWQHSELFRELREPQSAGACASCGHFDACRGGCMAAKFFTGLPLDGPDPECVEGWGAPALEKERVKPKPSGDHSRGTKQGPVALKLLTKPPARFCNESPV.

Residues 18 to 228 (LDAPICLTWE…YDWLVAKGDR (211 aa)) form the Radical SAM core domain. Residues Cys32, Cys36, Cys39, Cys253, Cys260, Cys271, Cys312, Cys315, Cys321, Cys325, and Cys343 each contribute to the [4Fe-4S] cluster site. A compositionally biased stretch (basic and acidic residues) spans 354 to 367 (KERVKPKPSGDHSR). The tract at residues 354–377 (KERVKPKPSGDHSRGTKQGPVALK) is disordered.

This sequence belongs to the radical SAM superfamily. MftC family. Requires [4Fe-4S] cluster as cofactor.

It carries out the reaction [mycofactocin precursor peptide]-C-terminal glycyl-L-valyl-L-tyrosine + S-adenosyl-L-methionine = [mycofactocin precursor peptide]-C-terminal glycyl-N-{[2-(4-hydroxyphenyl)ethenyl]-3-methylbutanamide} + 5'-deoxyadenosine + L-methionine + CO2. It catalyses the reaction [mycofactocin precursor peptide]-C-terminal glycyl-N-{[2-(4-hydroxyphenyl)ethenyl]-3-methylbutanamide} + AH2 + S-adenosyl-L-methionine = [mycofactocin precursor peptide]-C-terminal glycyl-N-{5-[(4-hydroxyphenyl)methyl]-4,4-dimethyl-2-oxopyrrolidin-3-yl}acetamide + 5'-deoxyadenosine + L-methionine + A + H(+). Radical S-adenosylmethionine (SAM) enzyme responsible for the first step of the biosynthesis of the enzyme cofactor mycofactocin (MFT). Catalyzes two reactions at the C-terminus of the mycofactocin precursor (the MftA peptide). The first one is the oxidative decarboxylation of the C-terminal L-tyrosine of MftA, forming an unsaturated tyramine moiety. The second reaction is the cross-linking of the tyramine with the penultimate L-valine residue, forming a five-membered lactam ring. Its activity requires the presence of the MftB chaperone. Is required for the in vivo ethanol assimilation in M.smegmatis. The protein is Mycofactocin maturase MftC of Mycolicibacterium smegmatis (strain ATCC 700084 / mc(2)155) (Mycobacterium smegmatis).